The following is a 544-amino-acid chain: MFQNEVTFNEDMGSQVYLDYLYNFDPLKDFFELSPWQESSFEKQAKKLQEREANRRTFRNQLTLGLHNYHKKFTDNPKVYNTIELLNDPETMTVVTGQQPGIMTGPLFAIYKIITAIKLSKKLSKNLDANVIPIFWICSDDHDFQEVNWLKTVDHKGEQLLYEIHDDKEGFSIGDRDIKHKSQDLLDKLAQQLQDSPYYDKWMTLFSKTLEQSKTLADWTAAIILELFGNEGVLVIDPMKPVFRQLSKPIFSKALDLGEGLHNSIDSQTEKLNNRGYSGQVDLRVNHSGLFYYYQGIRSPLTVEGDQFLLANLGIEKSKEDLVRELESDPAKFSPNVTLWPVLQDFLLPSLAYVAGPGEISYFAQLKQIYEQFEIGMPVIYPRESYLLLESDVKSILEKYQIGPENIFYDWPTTRKRVFRELAPINTEKVLNDTCRTIKEEHEKFIQELSRLDEKIYDFEEKNFHLIYRQLYYLKEKGDQYFRRQQLQAQRDLDYSKIKIYPLDKLQEREYNIGEFLCKYDSSVLKKLLKTPLNPQKISVVDLE.

The stretch at 431-463 forms a coiled coil; that stretch reads LNDTCRTIKEEHEKFIQELSRLDEKIYDFEEKN.

Belongs to the BshC family.

In terms of biological role, involved in bacillithiol (BSH) biosynthesis. May catalyze the last step of the pathway, the addition of cysteine to glucosamine malate (GlcN-Mal) to generate BSH. The sequence is that of Putative cysteine ligase BshC from Natranaerobius thermophilus (strain ATCC BAA-1301 / DSM 18059 / JW/NM-WN-LF).